The following is a 201-amino-acid chain: Small ribosomal subunit protein uS4c (201 aa).

The interval 17–44 (ALPGLTNKKPRTGSDLRNQSRSGKKSQY) is disordered. The 61-residue stretch at 89–149 (MRLDNILFRL…DEQKSRALIQ (61 aa)) folds into the S4 RNA-binding domain.

Belongs to the universal ribosomal protein uS4 family. In terms of assembly, part of the 30S ribosomal subunit. Contacts protein S5. The interaction surface between S4 and S5 is involved in control of translational fidelity.

It is found in the plastid. The protein resides in the chloroplast. Its function is as follows. One of the primary rRNA binding proteins, it binds directly to 16S rRNA where it nucleates assembly of the body of the 30S subunit. With S5 and S12 plays an important role in translational accuracy. This is Small ribosomal subunit protein uS4c (rps4) from Atropa belladonna (Belladonna).